The sequence spans 125 residues: Large ribosomal subunit protein uL22c (125 aa).

The protein belongs to the universal ribosomal protein uL22 family. In terms of assembly, part of the 50S ribosomal subunit.

The protein localises to the plastid. It localises to the chloroplast. Functionally, this protein binds specifically to 23S rRNA. Its function is as follows. The globular domain of the protein is located near the polypeptide exit tunnel on the outside of the subunit, while an extended beta-hairpin is found that lines the wall of the exit tunnel in the center of the 70S ribosome. The chain is Large ribosomal subunit protein uL22c (rpl22) from Nymphaea alba (White water-lily).